The sequence spans 285 residues: Probable endonuclease 4 (285 aa).

Zn(2+) contacts are provided by histidine 69, histidine 109, glutamate 145, aspartate 179, histidine 182, histidine 216, aspartate 229, histidine 231, and glutamate 261.

This sequence belongs to the AP endonuclease 2 family. Zn(2+) serves as cofactor.

The enzyme catalyses Endonucleolytic cleavage to 5'-phosphooligonucleotide end-products.. In terms of biological role, endonuclease IV plays a role in DNA repair. It cleaves phosphodiester bonds at apurinic or apyrimidinic (AP) sites, generating a 3'-hydroxyl group and a 5'-terminal sugar phosphate. The chain is Probable endonuclease 4 from Salmonella heidelberg (strain SL476).